Reading from the N-terminus, the 707-residue chain is Polyribonucleotide nucleotidyltransferase (707 aa).

Mg(2+) contacts are provided by Asp487 and Asp493. Residues 554–613 enclose the KH domain; the sequence is PKILTMNINPDKIRDVIGPSGKQINKIIEDTGVKIDIEQDGTIFISSTDESSNQKAKKII. Residues 623–691 form the S1 motif domain; the sequence is GQLYLGKVKR…KQGRVNLSRK (69 aa).

It belongs to the polyribonucleotide nucleotidyltransferase family. Mg(2+) is required as a cofactor.

Its subcellular location is the cytoplasm. The catalysed reaction is RNA(n+1) + phosphate = RNA(n) + a ribonucleoside 5'-diphosphate. In terms of biological role, involved in mRNA degradation. Catalyzes the phosphorolysis of single-stranded polyribonucleotides processively in the 3'- to 5'-direction. This Bacillus velezensis (strain DSM 23117 / BGSC 10A6 / LMG 26770 / FZB42) (Bacillus amyloliquefaciens subsp. plantarum) protein is Polyribonucleotide nucleotidyltransferase.